The chain runs to 401 residues: Thermophilic serine proteinase (401 aa).

An N-terminal signal peptide occupies residues 1–24; sequence MKFKAIVSLSLAVSMSLFPFLVEA. Positions 25 to 121 are excised as a propeptide; that stretch reads ASNDGVESPK…AEPNYLFNAA (97 aa). Asp126 provides a ligand contact to Ca(2+). The Peptidase S8 domain maps to 133–399; that stretch reads QYGPQNTYTD…YGRINSYNAV (267 aa). The active-site Charge relay system is Asp160. Ca(2+)-binding residues include Pro168, Asp169, Asp171, Asp179, Asp184, and Asp186. His193 (charge relay system) is an active-site residue. Residues Glu204, Asn207, Thr209, and Ile211 each coordinate Ca(2+). A disulfide bridge connects residues Cys258 and Cys260. Residues Tyr297, Val300, and Asp323 each coordinate Na(+). Ser347 acts as the Charge relay system in catalysis.

Belongs to the peptidase S8 family. Requires Ca(2+) as cofactor. Na(+) is required as a cofactor.

Its subcellular location is the secreted. In Bacillus sp. (strain AK1), this protein is Thermophilic serine proteinase.